The primary structure comprises 218 residues: DNA-binding protein HU 2 (218 aa).

A bacterial histone-like domain region spans residues 1–91; that stretch reads MNKAQLVEAI…QGFKDLVSGS (91 aa). The disordered stretch occupies residues 101–218; that stretch reads VKKAPKGSLS…TAKKATARKK (118 aa). Residues 118–218 are degenerate repeats region; sequence KAAGKKAAAK…TAKKATARKK (101 aa). A compositionally biased stretch (low complexity) spans 127-161; sequence KKATGAAKKTTGAAKKTSAAAKKTTAKKTTGAAKT. A compositionally biased stretch (basic residues) spans 162 to 172; it reads TAKKTTAKKSA. Residues 173–182 show a composition bias toward low complexity; it reads AKTTTAAAKK. Residues 183 to 218 show a composition bias toward basic residues; sequence TAAKKAPAKKATAKKAPAKKSTARKTTAKKATARKK.

It belongs to the bacterial histone-like protein family. Long actinobacterial subfamily. Homodimer.

The protein localises to the cytoplasm. The protein resides in the nucleoid. Its function is as follows. Histone-like DNA-binding protein which is capable of wrapping DNA to stabilize it, and thus to prevent its denaturation under extreme environmental conditions. In Streptomyces coelicolor (strain ATCC BAA-471 / A3(2) / M145), this protein is DNA-binding protein HU 2 (hup2).